We begin with the raw amino-acid sequence, 248 residues long: D-xylose 1-dehydrogenase (248 aa).

Residues Asp-42, Asp-68, Asn-91, Tyr-156, Lys-160, Val-189, and Thr-191 each contribute to the NAD(+) site. The active-site Proton acceptor is Tyr-156.

Belongs to the short-chain dehydrogenases/reductases (SDR) family.

The catalysed reaction is D-xylose + NAD(+) = D-xylono-1,5-lactone + NADH + H(+). Involved in the degradation of D-xylose. Catalyzes the initial reaction in the xylose utilization pathway by oxydizing D-xylose into D-xylonolactone. Shows some activity with L-arabinose and D-lyxose, but D-xylose is clearly the best substrate. Has no activity with D-ribose, D-glucose, D-galactose or D-mannose. In Caulobacter vibrioides (strain ATCC 19089 / CIP 103742 / CB 15) (Caulobacter crescentus), this protein is D-xylose 1-dehydrogenase.